Consider the following 127-residue polypeptide: Small ribosomal subunit protein uS11 (127 aa).

Belongs to the universal ribosomal protein uS11 family. In terms of assembly, part of the 30S ribosomal subunit. Interacts with proteins S7 and S18. Binds to IF-3.

Its function is as follows. Located on the platform of the 30S subunit, it bridges several disparate RNA helices of the 16S rRNA. Forms part of the Shine-Dalgarno cleft in the 70S ribosome. The chain is Small ribosomal subunit protein uS11 from Prosthecochloris aestuarii (strain DSM 271 / SK 413).